Consider the following 298-residue polypeptide: ATP phosphoribosyltransferase (298 aa).

It belongs to the ATP phosphoribosyltransferase family.

The protein localises to the cytoplasm. The catalysed reaction is 1-(5-phospho-beta-D-ribosyl)-ATP + diphosphate = 5-phospho-alpha-D-ribose 1-diphosphate + ATP. Its pathway is amino-acid biosynthesis; L-histidine biosynthesis; L-histidine from 5-phospho-alpha-D-ribose 1-diphosphate: step 1/9. Its function is as follows. Catalyzes the condensation of ATP and 5-phosphoribose 1-diphosphate to form N'-(5'-phosphoribosyl)-ATP (PR-ATP). Has a crucial role in the pathway because the rate of histidine biosynthesis seems to be controlled primarily by regulation of the enzymatic activity. In Candida albicans (strain SC5314 / ATCC MYA-2876) (Yeast), this protein is ATP phosphoribosyltransferase (HIS1).